The sequence spans 479 residues: Aspartyl/glutamyl-tRNA(Asn/Gln) amidotransferase subunit B (479 aa).

Belongs to the GatB/GatE family. GatB subfamily. As to quaternary structure, heterotrimer of A, B and C subunits.

It carries out the reaction L-glutamyl-tRNA(Gln) + L-glutamine + ATP + H2O = L-glutaminyl-tRNA(Gln) + L-glutamate + ADP + phosphate + H(+). The catalysed reaction is L-aspartyl-tRNA(Asn) + L-glutamine + ATP + H2O = L-asparaginyl-tRNA(Asn) + L-glutamate + ADP + phosphate + 2 H(+). In terms of biological role, allows the formation of correctly charged Asn-tRNA(Asn) or Gln-tRNA(Gln) through the transamidation of misacylated Asp-tRNA(Asn) or Glu-tRNA(Gln) in organisms which lack either or both of asparaginyl-tRNA or glutaminyl-tRNA synthetases. The reaction takes place in the presence of glutamine and ATP through an activated phospho-Asp-tRNA(Asn) or phospho-Glu-tRNA(Gln). The protein is Aspartyl/glutamyl-tRNA(Asn/Gln) amidotransferase subunit B of Geobacter sp. (strain M21).